The sequence spans 196 residues: GTP cyclohydrolase-2 (196 aa).

Residue 49–53 coordinates GTP; that stretch reads RVHSE. Zn(2+) is bound by residues Cys-54, Cys-65, and Cys-67. Residues Gln-70, 92–94, and Thr-114 each bind GTP; that span reads EGR. Asp-126 serves as the catalytic Proton acceptor. Catalysis depends on Arg-128, which acts as the Nucleophile. Thr-149 and Lys-154 together coordinate GTP.

Belongs to the GTP cyclohydrolase II family. Homodimer. Requires Zn(2+) as cofactor.

The enzyme catalyses GTP + 4 H2O = 2,5-diamino-6-hydroxy-4-(5-phosphoribosylamino)-pyrimidine + formate + 2 phosphate + 3 H(+). The protein operates within cofactor biosynthesis; riboflavin biosynthesis; 5-amino-6-(D-ribitylamino)uracil from GTP: step 1/4. Catalyzes the conversion of GTP to 2,5-diamino-6-ribosylamino-4(3H)-pyrimidinone 5'-phosphate (DARP), formate and pyrophosphate. This chain is GTP cyclohydrolase-2, found in Shigella boydii serotype 18 (strain CDC 3083-94 / BS512).